The chain runs to 255 residues: tRNA (guanine-N(7)-)-methyltransferase (255 aa).

The segment at 1–21 (MMHDDPNEAGLPPHDDAIPDE) is disordered. E86, E111, D138, and D161 together coordinate S-adenosyl-L-methionine. Residue D161 is part of the active site. Substrate is bound by residues K165, D197, and 232–235 (TKFE).

It belongs to the class I-like SAM-binding methyltransferase superfamily. TrmB family.

The catalysed reaction is guanosine(46) in tRNA + S-adenosyl-L-methionine = N(7)-methylguanosine(46) in tRNA + S-adenosyl-L-homocysteine. It participates in tRNA modification; N(7)-methylguanine-tRNA biosynthesis. In terms of biological role, catalyzes the formation of N(7)-methylguanine at position 46 (m7G46) in tRNA. In Burkholderia lata (strain ATCC 17760 / DSM 23089 / LMG 22485 / NCIMB 9086 / R18194 / 383), this protein is tRNA (guanine-N(7)-)-methyltransferase.